A 103-amino-acid chain; its full sequence is Large ribosomal subunit protein bL21 (103 aa).

This sequence belongs to the bacterial ribosomal protein bL21 family. As to quaternary structure, part of the 50S ribosomal subunit. Contacts protein L20.

Its function is as follows. This protein binds to 23S rRNA in the presence of protein L20. The polypeptide is Large ribosomal subunit protein bL21 (Kineococcus radiotolerans (strain ATCC BAA-149 / DSM 14245 / SRS30216)).